The primary structure comprises 165 residues: Calcium-binding protein H (165 aa).

EF-hand domains are found at residues 7-42 (QIEK…MGSK), 43-78 (YPEK…RYQD), 88-123 (YFQD…IGSD), and 124-159 (HPKE…TIRS). The Ca(2+) site is built by Asp-20, Asp-22, Asn-24, Glu-26, Glu-31, Asp-56, Asp-58, Glu-60, Lys-62, Glu-67, Asp-101, Asn-103, Asp-105, Arg-107, Glu-112, Asp-137, Asn-139, Asp-141, Tyr-143, and Glu-148.

The chain is Calcium-binding protein H (cbpH) from Dictyostelium discoideum (Social amoeba).